The following is a 368-amino-acid chain: Proline-rich protein 5-like (368 aa).

Residue Ser28 is modified to Phosphoserine. The disordered stretch occupies residues 312-368; it reads LGEESGGEDKCLLLQPSFPPPHRQCSSEPNITDGPDEPEQGATGSQEDSELNCASLS. Positions 353–368 are enriched in polar residues; the sequence is ATGSQEDSELNCASLS.

The protein belongs to the PROTOR family. Interacts with the mammalian target of rapamycin complex 2 (mTORC2) which contains MTOR, MLST8, PRR5, RICTOR, MAPKAP1 and DEPTOR. Interacts with RFFL. Interacts (via C-terminus) with ZFP36 (via C-terminus); this interaction may accelerate ZFP36-mediated mRNA decay during stress. Interacts with RICTOR. In terms of processing, ubiquitinated. Ubiquitination by RFFL promotes proteasomal degradation of PRR5L thereby modifying the substrate-specific activity of the mTORC2 complex. Ubiquitination by RFFL is stimulated by LPA/lysophosphatidic acid.

In terms of biological role, associates with the mTORC2 complex that regulates cellular processes including survival and organization of the cytoskeleton. Regulates the activity of the mTORC2 complex in a substrate-specific manner preventing for instance the specific phosphorylation of PKCs and thereby controlling cell migration. Plays a role in the stimulation of ZFP36-mediated mRNA decay of several ZFP36-associated mRNAs, such as TNF-alpha and GM-CSF, in response to stress. Required for ZFP36 localization to cytoplasmic stress granule (SG) and P-body (PB) in response to stress. The sequence is that of Proline-rich protein 5-like (PRR5L) from Bos taurus (Bovine).